A 444-amino-acid polypeptide reads, in one-letter code: MREILHIQGGQCGNQIGAKFWEVICDEHGVDATGRYAGDSDLQLERINVYYNEASGGRYVPRAVLMDLEPGTMDSVRSGPFGQIFRPDNFVFGQSGAGNNWAKGHYTEGAELIDSVLDVVRKEAENCDCLQGFQVCHSLGGGTGSGMGTLLISKIREEYPDRMMLTFSVFPSPKVSDTVVEPYNATLSVHQLVENADECMVLDNEALYDICFRTLKLATPTFGDLNHLISATMSGVTCCLRFPGQLNSDLRKLAVNLIPFPRLHFFMVGFAPLTSRGSQQYRALTVPELTQQMWDAKNMMCAADPRHGRYLTASAMFRGKMSTKEVDEQMLNVQNKNSSYFVEWIPNNVKSSVCDIPPRGLKMAATFVGNSTSIQEMFRRVSEQFTAMFRRKAFLHWYTGEGMDEMEFTEAESNMNDLVAEYQQYQDATADEEYEDEEEEAEAE.

GTP-binding residues include Gln-11, Glu-69, Ser-138, Gly-142, Thr-143, Gly-144, Asn-204, and Asn-226. Glu-69 is a binding site for Mg(2+).

Belongs to the tubulin family. Dimer of alpha and beta chains. A typical microtubule is a hollow water-filled tube with an outer diameter of 25 nm and an inner diameter of 15 nM. Alpha-beta heterodimers associate head-to-tail to form protofilaments running lengthwise along the microtubule wall with the beta-tubulin subunit facing the microtubule plus end conferring a structural polarity. Microtubules usually have 13 protofilaments but different protofilament numbers can be found in some organisms and specialized cells. It depends on Mg(2+) as a cofactor. Expressed in roots, leaf sheaths, and suspension cultured cells.

It is found in the cytoplasm. It localises to the cytoskeleton. In terms of biological role, tubulin is the major constituent of microtubules, a cylinder consisting of laterally associated linear protofilaments composed of alpha- and beta-tubulin heterodimers. Microtubules grow by the addition of GTP-tubulin dimers to the microtubule end, where a stabilizing cap forms. Below the cap, tubulin dimers are in GDP-bound state, owing to GTPase activity of alpha-tubulin. In Oryza sativa subsp. japonica (Rice), this protein is Tubulin beta-7 chain (TUBB7).